Here is a 393-residue protein sequence, read N- to C-terminus: Asparagine--oxo-acid transaminase (393 aa).

Positions 39, 126, and 176 each coordinate L-asparagine. Lys-239 bears the N6-(pyridoxal phosphate)lysine mark. Arg-370 contacts L-asparagine.

It belongs to the class-I pyridoxal-phosphate-dependent aminotransferase family. Pyridoxal 5'-phosphate serves as cofactor.

It catalyses the reaction a 2-oxocarboxylate + L-asparagine = 2-oxosuccinamate + an L-alpha-amino acid. It carries out the reaction L-asparagine + 2-oxoglutarate = 2-oxosuccinamate + L-glutamate. Catalyzes the transamination reaction between L-asparagine and 2-oxoglutarate to produce L-glutamate and 2-oxosuccinamate. Is not active with pyruvate as amine acceptor. May also use other amino acids as substrates. The polypeptide is Asparagine--oxo-acid transaminase (Streptococcus mutans serotype c (strain ATCC 700610 / UA159)).